A 540-amino-acid chain; its full sequence is Threonine--tRNA ligase catalytic subunit (540 aa).

Residues 134–428 (DHRIIGERLD…LLEHFRGKLP (295 aa)) are catalytic. Zn(2+) contacts are provided by C226, H277, and H405.

Belongs to the class-II aminoacyl-tRNA synthetase family. Homodimer. Probably interacts with its editing subunit. Zn(2+) is required as a cofactor.

The protein resides in the cytoplasm. It carries out the reaction tRNA(Thr) + L-threonine + ATP = L-threonyl-tRNA(Thr) + AMP + diphosphate + H(+). Its function is as follows. Catalyzes the attachment of threonine to tRNA(Thr) in a two-step reaction: L-threonine is first activated by ATP to form Thr-AMP and then transferred to the acceptor end of tRNA(Thr). Also activates L-serine and transfers it to tRNA(Thr) but cannot deacylate incorrectly charged amino acid; unlike most archaea the editing function is found in a freestanding protein. The chain is Threonine--tRNA ligase catalytic subunit from Sulfurisphaera tokodaii (strain DSM 16993 / JCM 10545 / NBRC 100140 / 7) (Sulfolobus tokodaii).